The primary structure comprises 79 residues: Putative defensin-like protein 29 (79 aa).

The N-terminal stretch at 1 to 26 (MASSGKCVFLVFLCMVALLAPSEVHA) is a signal peptide. Cystine bridges form between C45/C65, C51/C74, and C55/C76.

This sequence belongs to the DEFL family.

The protein resides in the secreted. This is Putative defensin-like protein 29 from Arabidopsis thaliana (Mouse-ear cress).